The sequence spans 89 residues: MAHKKAGGSSRNGRDSESKRLGVKKFGGEAVIAGNIIVRQRGTRWHPGDNVGIGKDHTLFALSKGMVSFQRKANNRSYVSVIPVVETVE.

The disordered stretch occupies residues M1–G22.

It belongs to the bacterial ribosomal protein bL27 family.

This chain is Large ribosomal subunit protein bL27, found in Bartonella henselae (strain ATCC 49882 / DSM 28221 / CCUG 30454 / Houston 1) (Rochalimaea henselae).